Consider the following 256-residue polypeptide: 5-keto-4-deoxy-D-glucarate aldolase (256 aa).

Histidine 50 serves as the catalytic Proton acceptor. Glutamine 151 is a binding site for substrate. Position 153 (glutamate 153) interacts with Mg(2+). Substrate is bound by residues serine 178 and aspartate 179. Position 179 (aspartate 179) interacts with Mg(2+).

Belongs to the HpcH/HpaI aldolase family. KDGluc aldolase subfamily. In terms of assembly, homohexamer; trimer of dimers. The cofactor is Mg(2+).

The enzyme catalyses 5-dehydro-4-deoxy-D-glucarate = 2-hydroxy-3-oxopropanoate + pyruvate. The catalysed reaction is 2-dehydro-3-deoxy-D-glucarate = 2-hydroxy-3-oxopropanoate + pyruvate. It participates in carbohydrate acid metabolism; galactarate degradation; D-glycerate from galactarate: step 2/3. Catalyzes the reversible retro-aldol cleavage of both 5-keto-4-deoxy-D-glucarate and 2-keto-3-deoxy-D-glucarate to pyruvate and tartronic semialdehyde. In Escherichia coli (strain ATCC 8739 / DSM 1576 / NBRC 3972 / NCIMB 8545 / WDCM 00012 / Crooks), this protein is 5-keto-4-deoxy-D-glucarate aldolase.